Reading from the N-terminus, the 687-residue chain is Translation initiation factor IF-2 (687 aa).

The tr-type G domain occupies 186-355 (KRPPIVTVMG…LLTAEMLELK (170 aa)). A G1 region spans residues 195–202 (GHVDHGKT). 195–202 (GHVDHGKT) contributes to the GTP binding site. A G2 region spans residues 220-224 (GITQH). The interval 241-244 (DTPG) is G3. GTP-binding positions include 241–245 (DTPGH) and 295–298 (NKID). A G4 region spans residues 295 to 298 (NKID). The interval 331 to 333 (SAK) is G5.

This sequence belongs to the TRAFAC class translation factor GTPase superfamily. Classic translation factor GTPase family. IF-2 subfamily.

The protein resides in the cytoplasm. Its function is as follows. One of the essential components for the initiation of protein synthesis. Protects formylmethionyl-tRNA from spontaneous hydrolysis and promotes its binding to the 30S ribosomal subunits. Also involved in the hydrolysis of GTP during the formation of the 70S ribosomal complex. The polypeptide is Translation initiation factor IF-2 (Clostridium botulinum (strain Alaska E43 / Type E3)).